The primary structure comprises 569 residues: Intraflagellar transport protein 74/72 (569 aa).

Coiled-coil stretches lie at residues 75–156 (ITAT…TRNE), 201–231 (YRSL…VAAN), and 271–298 (AITL…AESH).

The protein belongs to the IFT74 family.

The protein localises to the cell projection. The protein resides in the cilium. It localises to the flagellum. It is found in the cytoplasm. Its subcellular location is the cytoskeleton. The protein localises to the flagellum axoneme. The protein resides in the flagellum basal body. Functionally, component of the intraflagellar transport complex B (IFT-B) involved in flagellar assembly. The polypeptide is Intraflagellar transport protein 74/72 (Giardia intestinalis (strain ATCC 50803 / WB clone C6) (Giardia lamblia)).